The sequence spans 345 residues: Selenide, water dikinase (345 aa).

The active site involves C16. Residues K19 and 46–48 each bind ATP; that span reads TSD. D49 provides a ligand contact to Mg(2+). ATP contacts are provided by residues D66, D89, and 136 to 138; that span reads GHT. D89 provides a ligand contact to Mg(2+). D224 contributes to the Mg(2+) binding site.

This sequence belongs to the selenophosphate synthase 1 family. Class I subfamily. In terms of assembly, homodimer. The cofactor is Mg(2+).

The catalysed reaction is hydrogenselenide + ATP + H2O = selenophosphate + AMP + phosphate + 2 H(+). In terms of biological role, synthesizes selenophosphate from selenide and ATP. This is Selenide, water dikinase from Clostridium botulinum (strain Eklund 17B / Type B).